Here is a 689-residue protein sequence, read N- to C-terminus: Glycine--tRNA ligase beta subunit (689 aa).

This sequence belongs to the class-II aminoacyl-tRNA synthetase family. In terms of assembly, tetramer of two alpha and two beta subunits.

The protein resides in the cytoplasm. The catalysed reaction is tRNA(Gly) + glycine + ATP = glycyl-tRNA(Gly) + AMP + diphosphate. The chain is Glycine--tRNA ligase beta subunit from Erwinia tasmaniensis (strain DSM 17950 / CFBP 7177 / CIP 109463 / NCPPB 4357 / Et1/99).